The chain runs to 311 residues: L-lactate dehydrogenase 2 (311 aa).

Val14, Asp35, and Arg40 together coordinate NAD(+). Residues Arg90 and 122–125 contribute to the substrate site; that span reads NPCD. Residues 120–122 and Thr145 contribute to the NAD(+) site; that span reads ATN. 150-153 serves as a coordination point for substrate; the sequence is DTTR. Residue His177 is the Proton acceptor of the active site. Residue Thr230 coordinates substrate.

This sequence belongs to the LDH/MDH superfamily. LDH family. In terms of assembly, homotetramer.

It localises to the cytoplasm. It catalyses the reaction (S)-lactate + NAD(+) = pyruvate + NADH + H(+). It functions in the pathway fermentation; pyruvate fermentation to lactate; (S)-lactate from pyruvate: step 1/1. Its function is as follows. Catalyzes the conversion of lactate to pyruvate. The protein is L-lactate dehydrogenase 2 of Listeria monocytogenes serovar 1/2a (strain ATCC BAA-679 / EGD-e).